The following is a 267-amino-acid chain: Lyso-ornithine lipid O-acyltransferase (267 aa).

A helical transmembrane segment spans residues 7–27 (IFLVVAAMVALSLSLIPFQYL).

It belongs to the 1-acyl-sn-glycerol-3-phosphate acyltransferase family. OlsA subfamily.

It is found in the membrane. The catalysed reaction is a lyso-ornithine lipid + a fatty acyl-[ACP] = an N(2)-[(3R)-3-(acyloxy)acyl]-L-ornithine lipid + holo-[ACP]. Its pathway is lipid metabolism. In terms of biological role, catalyzes the second step in the formation of ornithine lipids, which are phosphorus-free membrane lipids. Uses acyl-acyl carrier protein (acyl-AcpP) as an acyl donor and converts lyso-ornithine lipid (LOL) into ornithine lipid (OL). This Brucella abortus (strain 2308) protein is Lyso-ornithine lipid O-acyltransferase.